The sequence spans 159 residues: Transcription antitermination protein NusB (159 aa).

Belongs to the NusB family.

Its function is as follows. Involved in transcription antitermination. Required for transcription of ribosomal RNA (rRNA) genes. Binds specifically to the boxA antiterminator sequence of the ribosomal RNA (rrn) operons. The polypeptide is Transcription antitermination protein NusB (Xanthomonas campestris pv. campestris (strain 8004)).